The chain runs to 131 residues: Sec-independent protein translocase protein TatB (131 aa).

Residues 2–22 form a helical membrane-spanning segment; it reads FDGIGFMELLLIGVLGLVVLG. The tract at residues 69-131 is disordered; it reads NQGLKNLAPE…ENAKSDKPNG (63 aa). Positions 105-123 are enriched in low complexity; it reads AKETPAKETATTETTSTEN.

The protein belongs to the TatB family. As to quaternary structure, the Tat system comprises two distinct complexes: a TatABC complex, containing multiple copies of TatA, TatB and TatC subunits, and a separate TatA complex, containing only TatA subunits. Substrates initially bind to the TatABC complex, which probably triggers association of the separate TatA complex to form the active translocon.

It localises to the cell inner membrane. Functionally, part of the twin-arginine translocation (Tat) system that transports large folded proteins containing a characteristic twin-arginine motif in their signal peptide across membranes. Together with TatC, TatB is part of a receptor directly interacting with Tat signal peptides. TatB may form an oligomeric binding site that transiently accommodates folded Tat precursor proteins before their translocation. This is Sec-independent protein translocase protein TatB from Shewanella piezotolerans (strain WP3 / JCM 13877).